A 303-amino-acid chain; its full sequence is Biphenyl-2,3-diol 1,2-dioxygenase (303 aa).

2 consecutive VOC domains span residues 5 to 119 and 143 to 264; these read SLGY…IYYG and GLGH…YGWS. Residues His-146, His-210, and Glu-260 each coordinate Fe cation. The disordered stretch occupies residues 283-303; that stretch reads WGHKSVRDKALRATKHEQQPE. Over residues 287 to 303 the composition is skewed to basic and acidic residues; the sequence is SVRDKALRATKHEQQPE.

Belongs to the extradiol ring-cleavage dioxygenase family. As to quaternary structure, homooctamer. The cofactor is Fe(2+).

The catalysed reaction is biphenyl-2,3-diol + O2 = 2-hydroxy-6-oxo-6-phenylhexa-2,4-dienoate + H(+). Its pathway is xenobiotic degradation; biphenyl degradation; 2-hydroxy-2,4-pentadienoate and benzoate from biphenyl: step 3/4. The chain is Biphenyl-2,3-diol 1,2-dioxygenase (bphC) from Metapseudomonas furukawaii (Pseudomonas furukawaii).